Consider the following 768-residue polypeptide: Glucoamylase S2 (768 aa).

Residues 1–21 form the signal peptide; sequence MQRPFLLAYLVLSLLFNSALG. 2 disordered regions span residues 29–83 and 125–149; these read RGSS…ETTI and TTTV…PTTP. A compositionally biased stretch (low complexity) spans 30–48; it reads GSSSSNITSSGPSSTPFSS. A glycan (N-linked (GlcNAc...) asparagine) is linked at N35. Polar residues predominate over residues 49-66; that stretch reads ATESFSTGTTVTPSSSKY. 2 stretches are compositionally biased toward low complexity: residues 71–83 and 131–149; these read TETS…ETTI and STSP…PTTP. N309, N323, N415, N424, and N435 each carry an N-linked (GlcNAc...) asparagine glycan. The interval 349-692 is h subunit; it reads VSIERIFENI…ASTTLYQLIY (344 aa). A substrate-binding site is contributed by W456. An N-linked (GlcNAc...) asparagine glycan is attached at N514. D519 acts as the Proton acceptor in catalysis. E522 (proton donor) is an active-site residue. N547, N646, N651, N721, and N742 each carry an N-linked (GlcNAc...) asparagine glycan. Residues 693–768 form a y subunit region; that stretch reads RHISEQHDLV…LKATWEQTGN (76 aa).

This sequence belongs to the glycosyl hydrolase 15 family.

The catalysed reaction is Hydrolysis of terminal (1-&gt;4)-linked alpha-D-glucose residues successively from non-reducing ends of the chains with release of beta-D-glucose.. In Saccharomyces cerevisiae (Baker's yeast), this protein is Glucoamylase S2 (STA2).